A 102-amino-acid chain; its full sequence is ATP-dependent Clp protease adapter protein ClpS (102 aa).

Belongs to the ClpS family. As to quaternary structure, binds to the N-terminal domain of the chaperone ClpA.

Involved in the modulation of the specificity of the ClpAP-mediated ATP-dependent protein degradation. This is ATP-dependent Clp protease adapter protein ClpS from Shewanella sp. (strain ANA-3).